Consider the following 296-residue polypeptide: Elongation factor Ts (296 aa).

The segment at 79 to 82 (TDFV) is involved in Mg(2+) ion dislocation from EF-Tu.

It belongs to the EF-Ts family.

It localises to the cytoplasm. Associates with the EF-Tu.GDP complex and induces the exchange of GDP to GTP. It remains bound to the aminoacyl-tRNA.EF-Tu.GTP complex up to the GTP hydrolysis stage on the ribosome. The polypeptide is Elongation factor Ts (Acholeplasma laidlawii (strain PG-8A)).